The following is a 225-amino-acid chain: Ribosomal RNA small subunit methyltransferase G (225 aa).

S-adenosyl-L-methionine contacts are provided by residues glycine 71, leucine 76, 121–122 (AE), and arginine 139. The tract at residues 204-225 (VVEARRATPSNGRGRPGRSSRR) is disordered.

This sequence belongs to the methyltransferase superfamily. RNA methyltransferase RsmG family.

It localises to the cytoplasm. In terms of biological role, specifically methylates the N7 position of guanine in position 518 of 16S rRNA. The polypeptide is Ribosomal RNA small subunit methyltransferase G (Mycobacterium sp. (strain KMS)).